We begin with the raw amino-acid sequence, 124 residues long: Small ribosomal subunit protein uS12 (124 aa).

The tract at residues 9–28 (KSERTVQKNQTKSPALDSCP) is disordered. Residue Asp-89 is modified to 3-methylthioaspartic acid.

Belongs to the universal ribosomal protein uS12 family. As to quaternary structure, part of the 30S ribosomal subunit. Contacts proteins S8 and S17. May interact with IF1 in the 30S initiation complex.

With S4 and S5 plays an important role in translational accuracy. Functionally, interacts with and stabilizes bases of the 16S rRNA that are involved in tRNA selection in the A site and with the mRNA backbone. Located at the interface of the 30S and 50S subunits, it traverses the body of the 30S subunit contacting proteins on the other side and probably holding the rRNA structure together. The combined cluster of proteins S8, S12 and S17 appears to hold together the shoulder and platform of the 30S subunit. The protein is Small ribosomal subunit protein uS12 of Bdellovibrio bacteriovorus (strain ATCC 15356 / DSM 50701 / NCIMB 9529 / HD100).